Consider the following 94-residue polypeptide: CRISPR-associated endoribonuclease Cas2 1 (94 aa).

Asp8 serves as a coordination point for Mg(2+).

This sequence belongs to the CRISPR-associated endoribonuclease Cas2 protein family. In terms of assembly, homodimer, forms a heterotetramer with a Cas1 homodimer. Mg(2+) is required as a cofactor.

Functionally, CRISPR (clustered regularly interspaced short palindromic repeat), is an adaptive immune system that provides protection against mobile genetic elements (viruses, transposable elements and conjugative plasmids). CRISPR clusters contain sequences complementary to antecedent mobile elements and target invading nucleic acids. CRISPR clusters are transcribed and processed into CRISPR RNA (crRNA). Functions as a ssRNA-specific endoribonuclease. Involved in the integration of spacer DNA into the CRISPR cassette. The polypeptide is CRISPR-associated endoribonuclease Cas2 1 (Synechocystis sp. (strain ATCC 27184 / PCC 6803 / Kazusa)).